The primary structure comprises 900 residues: Phosphoenolpyruvate carboxylase (900 aa).

Active-site residues include His-140 and Lys-568.

The protein belongs to the PEPCase type 1 family. The cofactor is Mg(2+).

The enzyme catalyses oxaloacetate + phosphate = phosphoenolpyruvate + hydrogencarbonate. Functionally, forms oxaloacetate, a four-carbon dicarboxylic acid source for the tricarboxylic acid cycle. The sequence is that of Phosphoenolpyruvate carboxylase from Neisseria gonorrhoeae (strain ATCC 700825 / FA 1090).